Consider the following 2150-residue polypeptide: Genome polyprotein (2150 aa).

Gly-2 carries the N-myristoyl glycine; by host lipid modification. Residues 2 to 1463 (GAQVSRQNVG…ELNLANTIIT (1462 aa)) are Cytoplasmic-facing. An amphipathic alpha-helix region spans residues 565–581 (IAQNPVENYIDEVLNEV). Residues 592 to 611 (PTTSNSAPALDAAETGHTSS) are disordered. Active-site for protease 2A activity residues include His-868 and Asp-885. The Zn(2+) site is built by Cys-902 and Cys-904. Cys-956 (for protease 2A activity) is an active-site residue. Zn(2+)-binding residues include Cys-962 and His-964. The membrane-binding stretch occupies residues 1088 to 1157 (SDSWLKKFTE…SLRVADMKTQ (70 aa)). Positions 1088 to 1221 (SDSWLKKFTE…PPGAGKSITT (134 aa)) are oligomerization. The RNA-binding stretch occupies residues 1109-1113 (GNKIS). Residues 1181–1343 (EAKRIKTLYI…FKDPQGKLNV (163 aa)) enclose the SF3 helicase domain. Zn(2+) is bound by residues Cys-1350, Cys-1361, and Cys-1366. Residues 1350–1366 (CDVDNRIGNARCCPFVC) form a C4-type; degenerate zinc finger. Residues 1393–1400 (EDRRRRQV) are RNA-binding. The tract at residues 1404–1409 (MTAIFQ) is oligomerization. An intramembrane segment occupies 1464 to 1479 (IIANVIGMARIIYVIY). The Cytoplasmic portion of the chain corresponds to 1480-2150 (KLFCTLQGPY…LLLHEWYEKF (671 aa)). Residue Tyr-1489 is modified to O-(5'-phospho-RNA)-tyrosine. Residues 1508 to 1686 (GPEEEFGMSL…FSAMLLRSYF (179 aa)) form the Peptidase C3 domain. Catalysis depends on for protease 3C activity residues His-1547, Glu-1578, and Cys-1654. The RdRp catalytic domain maps to 1918–2031 (KCIMAFDYTN…SYIHELDMEA (114 aa)). Residues Asp-1924 and Asp-2017 each coordinate Mg(2+).

It belongs to the picornaviruses polyprotein family. In terms of assembly, interacts with capsid protein VP1 and capsid protein VP3 to form heterotrimeric protomers. As to quaternary structure, interacts with capsid protein VP0, and capsid protein VP3 to form heterotrimeric protomers. Five protomers subsequently associate to form pentamers which serve as building blocks for the capsid. Interacts with capsid protein VP2, capsid protein VP3 and capsid protein VP4 following cleavage of capsid protein VP0. Interacts with capsid protein VP1 and capsid protein VP3 in the mature capsid. In terms of assembly, interacts with capsid protein VP0 and capsid protein VP1 to form heterotrimeric protomers. Five protomers subsequently associate to form pentamers which serve as building blocks for the capsid. Interacts with capsid protein VP4 in the mature capsid. Interacts with protein 2C; this interaction may be important for virion morphogenesis. As to quaternary structure, interacts with capsid protein VP1 and capsid protein VP3. Homodimer. In terms of assembly, homohexamer; forms a hexameric ring structure with 6-fold symmetry characteristic of AAA+ ATPases. Interacts (via N-terminus) with host RTN3 (via reticulon domain); this interaction is important for viral replication. Interacts with capsid protein VP3; this interaction may be important for virion morphogenesis. As to quaternary structure, interacts with protein 3CD. Homodimer. Interacts with host GBF1. Interacts (via GOLD domain) with host ACBD3 (via GOLD domain); this interaction allows the formation of a viral protein 3A/ACBD3 heterotetramer with a 2:2 stoichiometry, which will stimulate the recruitment of host PI4KB in order to synthesize PI4P at the viral RNA replication sites. In terms of assembly, interacts with RNA-directed RNA polymerase. As to quaternary structure, interacts with protein 3AB and with RNA-directed RNA polymerase. Interacts with Viral protein genome-linked and with protein 3CD. Mg(2+) is required as a cofactor. Post-translationally, specific enzymatic cleavages in vivo by the viral proteases yield processing intermediates and the mature proteins. In terms of processing, myristoylation is required for the formation of pentamers during virus assembly. Further assembly of 12 pentamers and a molecule of genomic RNA generates the provirion. During virion maturation, immature virions are rendered infectious following cleavage of VP0 into VP4 and VP2. This maturation seems to be an autocatalytic event triggered by the presence of RNA in the capsid and it is followed by a conformational change infectious virion. Post-translationally, myristoylation is required during RNA encapsidation and formation of the mature virus particle. In terms of processing, VPg is uridylylated by the polymerase into VPg-pUpU. This acts as a nucleotide-peptide primer for the genomic RNA replication.

It localises to the virion. Its subcellular location is the host cytoplasm. It is found in the host cytoplasmic vesicle membrane. The protein localises to the host nucleus. The catalysed reaction is a ribonucleoside 5'-triphosphate + H2O = a ribonucleoside 5'-diphosphate + phosphate + H(+). The enzyme catalyses Selective cleavage of Tyr-|-Gly bond in the picornavirus polyprotein.. It catalyses the reaction RNA(n) + a ribonucleoside 5'-triphosphate = RNA(n+1) + diphosphate. It carries out the reaction Selective cleavage of Gln-|-Gly bond in the poliovirus polyprotein. In other picornavirus reactions Glu may be substituted for Gln, and Ser or Thr for Gly.. Replication or transcription is subject to high level of random mutations by the nucleotide analog ribavirin. Functionally, forms an icosahedral capsid of pseudo T=3 symmetry with capsid proteins VP2 and VP3. The capsid is 300 Angstroms in diameter, composed of 60 copies of each capsid protein and enclosing the viral positive strand RNA genome. Capsid protein VP1 mainly forms the vertices of the capsid. Capsid protein VP1 interacts with host cell receptor to provide virion attachment to target host cells. This attachment induces virion internalization. Tyrosine kinases are probably involved in the entry process. After binding to its receptor, the capsid undergoes conformational changes. Capsid protein VP1 N-terminus (that contains an amphipathic alpha-helix) and capsid protein VP4 are externalized. Together, they shape a pore in the host membrane through which viral genome is translocated to host cell cytoplasm. In terms of biological role, forms an icosahedral capsid of pseudo T=3 symmetry with capsid proteins VP2 and VP3. The capsid is 300 Angstroms in diameter, composed of 60 copies of each capsid protein and enclosing the viral positive strand RNA genome. Lies on the inner surface of the capsid shell. After binding to the host receptor, the capsid undergoes conformational changes. Capsid protein VP4 is released, Capsid protein VP1 N-terminus is externalized, and together, they shape a pore in the host membrane through which the viral genome is translocated into the host cell cytoplasm. Its function is as follows. Component of immature procapsids, which is cleaved into capsid proteins VP4 and VP2 after maturation. Allows the capsid to remain inactive before the maturation step. Functionally, cysteine protease that cleaves viral polyprotein and specific host proteins. It is responsible for the autocatalytic cleavage between the P1 and P2 regions, which is the first cleavage occurring in the polyprotein. Also cleaves the host translation initiation factor EIF4G1, in order to shut down the capped cellular mRNA translation. Inhibits the host nucleus-cytoplasm protein and RNA trafficking by cleaving host members of the nuclear pores. Counteracts stress granule formation probably by antagonizing its assembly or promoting its dissassembly. In terms of biological role, plays an essential role in the virus replication cycle by acting as a viroporin. Creates a pore in the host endoplasmic reticulum and as a consequence releases Ca2+ in the cytoplasm of infected cell. In turn, high levels of cytoplasmic calcium may trigger membrane trafficking and transport of viral ER-associated proteins to viroplasms, sites of viral genome replication. Induces and associates with structural rearrangements of intracellular membranes. Displays RNA-binding, nucleotide binding and NTPase activities. May play a role in virion morphogenesis and viral RNA encapsidation by interacting with the capsid protein VP3. Its function is as follows. Localizes the viral replication complex to the surface of membranous vesicles. Together with protein 3CD binds the Cis-Active RNA Element (CRE) which is involved in RNA synthesis initiation. Acts as a cofactor to stimulate the activity of 3D polymerase, maybe through a nucleid acid chaperone activity. Functionally, localizes the viral replication complex to the surface of membranous vesicles. It inhibits host cell endoplasmic reticulum-to-Golgi apparatus transport and causes the disassembly of the Golgi complex, possibly through GBF1 interaction. This would result in depletion of MHC, trail receptors and IFN receptors at the host cell surface. Plays an essential role in viral RNA replication by recruiting ACBD3 and PI4KB at the viral replication sites, thereby allowing the formation of the rearranged membranous structures where viral replication takes place. In terms of biological role, acts as a primer for viral RNA replication and remains covalently bound to viral genomic RNA. VPg is uridylylated prior to priming replication into VPg-pUpU. The oriI viral genomic sequence may act as a template for this. The VPg-pUpU is then used as primer on the genomic RNA poly(A) by the RNA-dependent RNA polymerase to replicate the viral genome. During genome replication, the VPg-RNA linkage is removed by the host TDP2, thereby accelerating replication. During the late stage of the replication cycle, host TDP2 is excluded from sites of viral RNA synthesis and encapsidation, allowing for the generation of progeny virions. Involved in the viral replication complex and viral polypeptide maturation. It exhibits protease activity with a specificity and catalytic efficiency that is different from protease 3C. Protein 3CD lacks polymerase activity. Protein 3CD binds to the 5'UTR of the viral genome. Its function is as follows. Replicates the viral genomic RNA on the surface of intracellular membranes. May form linear arrays of subunits that propagate along a strong head-to-tail interaction called interface-I. Covalently attaches UMP to a tyrosine of VPg, which is used to prime RNA synthesis. The positive stranded RNA genome is first replicated at virus induced membranous vesicles, creating a dsRNA genomic replication form. This dsRNA is then used as template to synthesize positive stranded RNA genomes. ss(+)RNA genomes are either translated, replicated or encapsidated. Functionally, major viral protease that mediates proteolytic processing of the polyprotein. Cleaves host EIF5B, contributing to host translation shutoff. Also cleaves host PABPC1, contributing to host translation shutoff. Cleaves host NLRP1, triggers host N-glycine-mediated degradation of the autoinhibitory NLRP1 N-terminal fragment. The sequence is that of Genome polyprotein from Homo sapiens (Human).